A 358-amino-acid polypeptide reads, in one-letter code: Na(+)/H(+) exchange regulatory cofactor NHE-RF1 (358 aa).

The residue at position 2 (serine 2) is an N-acetylserine. Phosphoserine occurs at positions 2 and 46. Residues leucine 14 to aspartate 94 enclose the PDZ 1 domain. Over residues glutamine 114 to glutamate 134 the composition is skewed to low complexity. The tract at residues glutamine 114 to arginine 151 is disordered. Basic and acidic residues predominate over residues asparagine 135–arginine 151. One can recognise a PDZ 2 domain in the interval leucine 154–glutamate 234. Residues serine 247 to leucine 358 are disordered. The segment covering leucine 272–serine 290 has biased composition (low complexity). A phosphoserine mark is found at serine 279, serine 289, and serine 290. Position 292 is a phosphothreonine (threonine 292). Serine 293, serine 298, and serine 301 each carry phosphoserine. The span at threonine 308–leucine 327 shows a compositional bias: low complexity. Residues tryptophan 348 to leucine 358 show a composition bias toward basic and acidic residues.

As to quaternary structure, homodimer, and heterodimer with NHERF2. Binds the N-termini of EZR, RDX and MSN. Binds the C-termini of PDGFRA, PDGFRB, ADRB2, NOS2 and CFTR. Binds ARHGAP17, EPI64, RACK1, OPRK1, GNAQ, CTNNB1 and PLCB3. Binds PDZK1. Interacts with CLCN3. Binds the C-terminus of PAG1. In resting T-cells, part of a PAG1-NHERF1-MSN complex which is disrupted upon TCR activation. Forms a complex with CFTR and SLC4A7. Forms a complex with SLC4A7 and ATP6V1B1. Interacts with TRPC4 (via the PDZ-binding domain). Directly interacts with HTR4. Interacts (via the PDZ 1 domain) with PODXL (via the C-terminal PDZ-binding motif DTHL); interaction is not detected in glomerular epithelium cells. Interacts (via the PDZ 1 domain) with PODXL (via the C-terminal PDZ-binding motif DTHL); the interaction take place early in the secretory pathway and is necessary for its apical membrane sorting. Interacts with SLC26A3. Interacts with MCC. Interacts with SLC34A1. Interacts (via the PDZ domains) with SLC26A6 isoform 4 and isoform 5. Interacts (via PDZ domains) with ACE2 (via PDZ-binding motif); the interaction may enhance ACE2 membrane residence. Phosphorylated on serine residues. Detected in ileum, duodenum and in kidney, where it is found in the glomerulus, the proximal tubule, the thick ascending limb of Henle's loop and the cortical collecting duct.

Its subcellular location is the cytoplasm. It localises to the apical cell membrane. It is found in the cell projection. The protein localises to the filopodium. The protein resides in the ruffle. Its subcellular location is the microvillus. It localises to the endomembrane system. Scaffold protein that connects plasma membrane proteins with members of the ezrin/moesin/radixin family and thereby helps to link them to the actin cytoskeleton and to regulate their surface expression. Necessary for recycling of internalized ADRB2. Was first known to play a role in the regulation of the activity and subcellular location of SLC9A3. Necessary for cAMP-mediated phosphorylation and inhibition of SLC9A3. Involved in sperm capacitation. May participate in the regulation of the chloride and bicarbonate homeostasis in spermatozoa. May enhance Wnt signaling. May participate in HTR4 targeting to microvilli. Involved in the regulation of phosphate reabsorption in the renal proximal tubules. In Oryctolagus cuniculus (Rabbit), this protein is Na(+)/H(+) exchange regulatory cofactor NHE-RF1 (NHERF1).